A 300-amino-acid polypeptide reads, in one-letter code: Ferredoxin/F(420)H(2)-dependent CoB-CoM heterodisulfide reductase subunit B (300 aa).

This sequence belongs to the HdrB family. The ferredoxin/F(420)H(2)-dependent CoB-CoM heterodisulfide reductase is composed of three subunits; HdrA2, HdrB2 and HdrC2. The cofactor is [4Fe-4S] cluster.

It localises to the cytoplasm. The catalysed reaction is coenzyme B + coenzyme M + 2 oxidized [2Fe-2S]-[ferredoxin] = coenzyme M-coenzyme B heterodisulfide + 2 reduced [2Fe-2S]-[ferredoxin] + 2 H(+). It carries out the reaction coenzyme B + 2 oxidized coenzyme F420-(gamma-L-Glu)(n) + coenzyme M + 2 reduced [2Fe-2S]-[ferredoxin] + 4 H(+) = coenzyme M-coenzyme B heterodisulfide + 2 reduced coenzyme F420-(gamma-L-Glu)(n) + 2 oxidized [2Fe-2S]-[ferredoxin]. Its pathway is cofactor metabolism; coenzyme M-coenzyme B heterodisulfide reduction; coenzyme B and coenzyme M from coenzyme M-coenzyme B heterodisulfide: step 1/1. Part of a complex that catalyzes the reversible reduction of CoM-S-S-CoB to the thiol-coenzymes H-S-CoM (coenzyme M) and H-S-CoB (coenzyme B). Catalyzes the transfer of electrons from ferredoxin to CoM-S-S-CoB during methanogenesis from acetate. Electrons transfer from ferredoxin to CoM-S-S-CoB via HdrA2, HdrC2 and HdrB2. In addition, the complex can use electron bifurcation to direct electron pairs from reduced coenzyme F420 towards the reduction of both ferredoxin and CoB-CoM heterodisulfide. This activity may take place during Fe(III)-dependent anaerobic methane oxidation. This is Ferredoxin/F(420)H(2)-dependent CoB-CoM heterodisulfide reductase subunit B from Methanosarcina acetivorans (strain ATCC 35395 / DSM 2834 / JCM 12185 / C2A).